We begin with the raw amino-acid sequence, 530 residues long: uncharacterized protein (530 aa).

This sequence belongs to the protein kinase superfamily. ADCK protein kinase family.

This is an uncharacterized protein from Clostridium pasteurianum.